The primary structure comprises 200 residues: Recombination protein RecR (200 aa).

The C4-type zinc-finger motif lies at 57-72 (CEHCRTFTEEDICSIC). In terms of domain architecture, Toprim spans 81–176 (RLLCVVEMPA…KVSRIAHGIP (96 aa)).

It belongs to the RecR family.

In terms of biological role, may play a role in DNA repair. It seems to be involved in an RecBC-independent recombinational process of DNA repair. It may act with RecF and RecO. The sequence is that of Recombination protein RecR from Mannheimia succiniciproducens (strain KCTC 0769BP / MBEL55E).